We begin with the raw amino-acid sequence, 465 residues long: Neuromedin-K receptor (465 aa).

Over 1–84 the chain is Extracellular; the sequence is MATLPAAETW…TNQFVQPSWR (84 aa). N-linked (GlcNAc...) asparagine glycosylation is found at asparagine 23, asparagine 50, and asparagine 73. Residues 85–107 form a helical membrane-spanning segment; sequence IALWSLAYGVVVAVAVLGNLIVI. The Cytoplasmic segment spans residues 108-117; the sequence is WIILAHKRMR. Residues 118 to 139 traverse the membrane as a helical segment; the sequence is TVTNYFLVNLAFSDASMAAFNT. Over 140–159 the chain is Extracellular; the sequence is LVNFIYALHSEWYFGANYCR. A disulfide bridge connects residues cysteine 158 and cysteine 233. The chain crosses the membrane as a helical span at residues 160-181; the sequence is FQNFFPITAVFASIYSMTAIAV. Over 182 to 201 the chain is Cytoplasmic; sequence DRYMAIIDPLKPRLSATATK. Residues 202 to 222 traverse the membrane as a helical segment; sequence IVIGSIWILAFLLAFPQCLYS. Residues 223 to 245 are Extracellular-facing; the sequence is KTKVMPGRTLCFVQWPEGPKQHF. The helical transmembrane segment at 246–270 threads the bilayer; sequence TYHIIVIILVYCFPLLIMGITYTIV. The Cytoplasmic portion of the chain corresponds to 271-299; it reads GITLWGGEIPGDTCDKYHEQLKAKRKVVK. A helical membrane pass occupies residues 300–321; it reads MMIIVVMTFAICWLPYHIYFIL. The Extracellular segment spans residues 322-334; sequence TAIYQQLNRWKYI. A helical membrane pass occupies residues 335–359; it reads QQVYLASFWLAMSSTMYNPIIYCCL. Residues 360-465 lie on the Cytoplasmic side of the membrane; that stretch reads NKRFRAGFKR…SPYTSVDEYS (106 aa). Cysteine 374 carries the S-palmitoyl cysteine lipid modification. Residues 415 to 465 form a disordered region; sequence PNDADTTRSSRKKRATPRDPSFNGCSRRNSKSASATSSFISSPYTSVDEYS. Residues 445-465 are compositionally biased toward low complexity; that stretch reads KSASATSSFISSPYTSVDEYS.

Belongs to the G-protein coupled receptor 1 family. In terms of processing, the anchoring of this receptor to the plasma membrane is probably mediated by the palmitoylation of a cysteine residue.

The protein localises to the cell membrane. This is a receptor for the tachykinin neuropeptide neuromedin-K (neurokinin B). It is associated with G proteins that activate a phosphatidylinositol-calcium second messenger system. The rank order of affinity of this receptor to tachykinins is: neuromedin-K &gt; substance K &gt; substance P. The chain is Neuromedin-K receptor (TACR3) from Homo sapiens (Human).